The chain runs to 728 residues: Procollagen-lysine,2-oxoglutarate 5-dioxygenase 1 (728 aa).

An N-terminal signal peptide occupies residues 1 to 18 (MRSLLLLASLAWLLLAQA). N-linked (GlcNAc...) asparagine glycans are attached at residues N177, N198, and N539. The Fe2OG dioxygenase domain maps to 637–728 (QFDLAFVVRY…RYIAVSFVDP (92 aa)). 2 residues coordinate Fe cation: H657 and D659. N-linked (GlcNAc...) asparagine glycosylation is present at N687. Residue H709 participates in Fe cation binding. R719 is a catalytic residue.

In terms of assembly, homodimer. Identified in a complex with P3H3 and P3H4. Requires Fe(2+) as cofactor. L-ascorbate serves as cofactor.

Its subcellular location is the rough endoplasmic reticulum membrane. It carries out the reaction L-lysyl-[collagen] + 2-oxoglutarate + O2 = (5R)-5-hydroxy-L-lysyl-[collagen] + succinate + CO2. In terms of biological role, part of a complex composed of PLOD1, P3H3 and P3H4 that catalyzes hydroxylation of lysine residues in collagen alpha chains and is required for normal assembly and cross-linkling of collagen fibrils. Forms hydroxylysine residues in -Xaa-Lys-Gly- sequences in collagens. These hydroxylysines serve as sites of attachment for carbohydrate units and are essential for the stability of the intermolecular collagen cross-links. The chain is Procollagen-lysine,2-oxoglutarate 5-dioxygenase 1 (Plod1) from Rattus norvegicus (Rat).